The primary structure comprises 161 residues: Cytochrome b6-f complex subunit 4 (161 aa).

A run of 3 helical transmembrane segments spans residues 37–57 (LLYIFPVVIMGTIALVIGLAV), 96–116 (LLGVLMNASIPLGLMLIPFIE), and 130–150 (AMTVFLFGTLVTLWLGIGAAF).

It belongs to the cytochrome b family. PetD subfamily. The 4 large subunits of the cytochrome b6-f complex are cytochrome b6, subunit IV (17 kDa polypeptide, PetD), cytochrome f and the Rieske protein, while the 4 small subunits are PetG, PetL, PetM and PetN. The complex functions as a dimer.

The protein resides in the cellular thylakoid membrane. In terms of biological role, component of the cytochrome b6-f complex, which mediates electron transfer between photosystem II (PSII) and photosystem I (PSI), cyclic electron flow around PSI, and state transitions. The sequence is that of Cytochrome b6-f complex subunit 4 from Synechococcus elongatus.